Here is a 429-residue protein sequence, read N- to C-terminus: Keratin, type I cytoskeletal 18 (429 aa).

A head region spans residues Ser2–Asn78. A coil 1A region spans residues Glu79 to His114. The region spanning Glu79–Asp389 is the IF rod domain. The segment at Thr115–Thr130 is linker 1. The segment at Ile131–Leu222 is coil 1B. A linker 12 region spans residues Gln223 to Ile246. A coil 2 region spans residues Met247 to Asp385. The tail stretch occupies residues Gly386–Ser429.

The protein belongs to the intermediate filament family. Heterotetramer of two type I and two type II keratins. Keratin-18 associates with keratin-8. Phosphorylated. Post-translationally, proteolytically cleaved by caspases during epithelial cell apoptosis.

In terms of biological role, when phosphorylated, plays a role in filament reorganization. The chain is Keratin, type I cytoskeletal 18 from Xenopus tropicalis (Western clawed frog).